The sequence spans 285 residues: MIEVTLLGTGSPVPDARRAGPSTLVRAGGHAFLVDCGRGVQLRMAAAGIAANGLSALLLTHLHSDHIADLGDLLITRWVTTFTDQVPLQIIGPPGTAETVTAMLAAFGRDIGYRIAHHPDLTAPPPVEVHEVTEGVAWDHDGVTVRVAPTDHRPVAPTIGFRVEHADASVVLAGDTVPCATLDALAAGAGALVHTAIRKDLVELAPQQRVREVCEYHSSVEEAAETAERAGVGILVLTHYLPPIAPGQEADWRARAATAFPRQIELGDDLHRVEVHPGVCVKPAG.

Zn(2+)-binding residues include His-61, His-63, Asp-65, His-66, His-152, Asp-175, and His-239. Asp-65 serves as the catalytic Proton acceptor.

This sequence belongs to the RNase Z family. Homodimer. Requires Zn(2+) as cofactor.

The catalysed reaction is Endonucleolytic cleavage of RNA, removing extra 3' nucleotides from tRNA precursor, generating 3' termini of tRNAs. A 3'-hydroxy group is left at the tRNA terminus and a 5'-phosphoryl group is left at the trailer molecule.. Its function is as follows. Zinc phosphodiesterase, which displays some tRNA 3'-processing endonuclease activity. Probably involved in tRNA maturation, by removing a 3'-trailer from precursor tRNA. In Mycobacterium sp. (strain JLS), this protein is Ribonuclease Z.